The chain runs to 138 residues: Cysteine desulfuration protein SufE (138 aa).

The active-site Cysteine persulfide intermediate is the C51.

It belongs to the SufE family. Homodimer. Interacts with SufS.

The protein localises to the cytoplasm. It participates in cofactor biosynthesis; iron-sulfur cluster biosynthesis. Its function is as follows. Participates in cysteine desulfuration mediated by SufS. Cysteine desulfuration mobilizes sulfur from L-cysteine to yield L-alanine and constitutes an essential step in sulfur metabolism for biosynthesis of a variety of sulfur-containing biomolecules. Functions as a sulfur acceptor for SufS, by mediating the direct transfer of the sulfur atom from the S-sulfanylcysteine of SufS, an intermediate product of cysteine desulfuration process. The chain is Cysteine desulfuration protein SufE from Klebsiella pneumoniae subsp. pneumoniae (strain ATCC 700721 / MGH 78578).